A 344-amino-acid polypeptide reads, in one-letter code: Dihydroorotase (344 aa).

Positions 13 and 15 each coordinate Zn(2+). Substrate contacts are provided by residues 15–17 and Asn-41; that span reads HLR. Zn(2+) is bound by residues Lys-99, His-136, and His-174. Position 99 is an N6-carboxylysine (Lys-99). Residue His-136 coordinates substrate. Leu-219 lines the substrate pocket. A Zn(2+)-binding site is contributed by Asp-247. Residue Asp-247 is part of the active site. Residues His-251 and Ala-263 each coordinate substrate.

It belongs to the metallo-dependent hydrolases superfamily. DHOase family. Class II DHOase subfamily. In terms of assembly, homodimer. It depends on Zn(2+) as a cofactor.

The enzyme catalyses (S)-dihydroorotate + H2O = N-carbamoyl-L-aspartate + H(+). It participates in pyrimidine metabolism; UMP biosynthesis via de novo pathway; (S)-dihydroorotate from bicarbonate: step 3/3. Functionally, catalyzes the reversible cyclization of carbamoyl aspartate to dihydroorotate. The polypeptide is Dihydroorotase (Idiomarina loihiensis (strain ATCC BAA-735 / DSM 15497 / L2-TR)).